Reading from the N-terminus, the 334-residue chain is Beta-hexosaminidase (334 aa).

Substrate is bound by residues Asp60, Arg68, Arg133, and 163 to 164 (KH). His176 functions as the Proton donor/acceptor in the catalytic mechanism. The active-site Nucleophile is Asp247.

This sequence belongs to the glycosyl hydrolase 3 family. NagZ subfamily.

Its subcellular location is the cytoplasm. It carries out the reaction Hydrolysis of terminal non-reducing N-acetyl-D-hexosamine residues in N-acetyl-beta-D-hexosaminides.. Its pathway is cell wall biogenesis; peptidoglycan recycling. Its function is as follows. Plays a role in peptidoglycan recycling by cleaving the terminal beta-1,4-linked N-acetylglucosamine (GlcNAc) from peptide-linked peptidoglycan fragments, giving rise to free GlcNAc, anhydro-N-acetylmuramic acid and anhydro-N-acetylmuramic acid-linked peptides. This chain is Beta-hexosaminidase, found in Xanthomonas oryzae pv. oryzae (strain KACC10331 / KXO85).